Here is a 1216-residue protein sequence, read N- to C-terminus: Apical endosomal glycoprotein (1216 aa).

The signal sequence occupies residues 1 to 21; the sequence is MCLPSCLLSIWVLFMAAQSLG. Over 22–1155 the chain is Extracellular; it reads KTWVPDHCRS…SQGRVAAPVS (1134 aa). Residues 27–54 enclose the LDL-receptor class A 1; truncated domain; sequence DHCRSPTEATCNFVCDCGDCSDEAQCGF. The MAM 1 domain maps to 62-224; that stretch reads NTPFTCNFEQ…DDMEFWDCGL (163 aa). Asn205 carries an N-linked (GlcNAc...) asparagine glycan. In terms of domain architecture, LDL-receptor class A 2 spans 229–269; the sequence is ARCPLGHHHCQNKACVEPHQLCDGEDNCGDSSDEDPLICSH. 3 disulfide bridges follow: Cys231–Cys243, Cys238–Cys256, and Cys250–Cys267. An MAM 2 domain is found at 268–427; the sequence is SHHMATDFET…DLIMSNHCIL (160 aa). Residues Asn291, Asn341, and Asn368 are each glycosylated (N-linked (GlcNAc...) asparagine). The LDL-receptor class A 3 domain occupies 454–491; it reads RTCDAGHLSCDELCVPPEQLCDFQQHCAEGEDEEKCGT. Disulfide bonds link Cys456–Cys467, Cys463–Cys480, and Cys474–Cys489. 4 consecutive MAM domains span residues 492–647, 654–813, 812–973, and 972–1142; these read TDFE…DCNP, DQEV…PCWA, WAAK…PCAQ, and AQPG…HCKQ. A glycan (N-linked (GlcNAc...) asparagine) is linked at Asn639. The N-linked (GlcNAc...) asparagine glycan is linked to Asn839. The helical transmembrane segment at 1156–1176 threads the bilayer; the sequence is VPVAVGGALLLFLLLLGLGGW. At 1177–1216 the chain is on the cytoplasmic side; it reads HWLQKQHLPCQSTDAAASGFDNILFNADQVTLPESITSNP.

In terms of tissue distribution, apical endosomal tubules of developing rat intestinal epithelial cells.

Its subcellular location is the membrane. In terms of biological role, probably involved in the sorting and selective transport of receptors and ligands across polarized epithelia. The polypeptide is Apical endosomal glycoprotein (Mamdc4) (Rattus norvegicus (Rat)).